The primary structure comprises 156 residues: Organelle RRM domain-containing protein 2, mitochondrial (156 aa).

Residues 1–28 constitute a mitochondrion transit peptide; the sequence is MAMAMRLPAISRAVTEVASAPVGLRRLF. The RRM domain maps to 56-134; that stretch reads TNLFVSGLSK…WVIFAEYARP (79 aa). Position 64 is a phosphoserine (serine 64). Polar residues predominate over residues 137 to 148; it reads QSQSYQPQNNMS. The interval 137–156 is disordered; sequence QSQSYQPQNNMSRPPYYGNR.

In terms of assembly, interacts with RBG3/ORRM3. Binds to RBG2/ORRM5.

The protein localises to the mitochondrion. Its function is as follows. Involved in C-to-U editing of mitochondrial RNA. Functions as minor mitochondrial editing factor. Controls 6 percent of the mitochondrial editing sites. This is Organelle RRM domain-containing protein 2, mitochondrial from Arabidopsis thaliana (Mouse-ear cress).